A 231-amino-acid chain; its full sequence is uncharacterized protein (231 aa).

3 helical membrane-spanning segments follow: residues 6-26, 39-59, and 66-86; these read IKLI…YKYI, NIVS…STFS, and FCFQ…GYAF.

The protein localises to the cell membrane. This is an uncharacterized protein from Rickettsia prowazekii (strain Madrid E).